A 1031-amino-acid polypeptide reads, in one-letter code: GTPase-activating protein DDB_G0291510 (1031 aa).

The segment at 18-48 is disordered; sequence VEKGDIDENNSGSINNRPLSPTLFSSNSSNN. Residues 26–41 are compositionally biased toward polar residues; it reads NNSGSINNRPLSPTLF. In terms of domain architecture, Rap-GAP spans 186-404; it reads FKDLEQTQTE…RTFKDQLESI (219 aa). Residues 471–881 form the CNH domain; sequence NEKINCLDVV…LSNDDCNLDN (411 aa). The tract at residues 920 to 950 is disordered; sequence NNNYNNNGNNSNGGNNNNNNNNNNGCNNSLI.

The protein is GTPase-activating protein DDB_G0291510 of Dictyostelium discoideum (Social amoeba).